Reading from the N-terminus, the 349-residue chain is AdoMet-dependent heme synthase (349 aa).

A Radical SAM core domain is found at 5–214 (TNAPRLIAWE…LHWFYEMQKE (210 aa)). The [4Fe-4S] cluster site is built by Cys-19, Cys-23, and Cys-26.

It belongs to the radical SAM superfamily. Requires [4Fe-4S] cluster as cofactor.

The catalysed reaction is Fe-coproporphyrin III + 2 S-adenosyl-L-methionine = heme b + 2 5'-deoxyadenosine + 2 L-methionine + 2 CO2. Its pathway is porphyrin-containing compound metabolism; protoheme biosynthesis. Functionally, involved in siroheme-dependent heme b biosynthesis. Catalyzes the conversion of Fe-coproporphyrin III into heme by the oxidative decarboxylation of two propionate side chains. The sequence is that of AdoMet-dependent heme synthase from Methanosarcina barkeri (strain Fusaro / DSM 804).